The primary structure comprises 270 residues: Multi-heme protein MamP (270 aa).

The Cytoplasmic segment spans residues 1 to 6 (MNSKLV). At 7 to 20 (LLVVGVVFALVLVI) the chain is embedded in the membrane. The Lumenal portion of the chain corresponds to 21–270 (GRQGGVVAPQ…GPCEACHVIN (250 aa)). The tract at residues 84-201 (NLKVFEGHWQ…GGLGFAQLEG (118 aa)) is PDZ. An MCR (magnetochrome) 1 motif is present at residues 205 to 225 (ILPGDPRPHGYRGACTDCHPV). Heme is bound by residues C219, C222, H223, C263, C266, and H267. Residues 245-269 (ITRDAVTRGVSPHEVRGPCEACHVI) carry the MCR 2 motif.

The protein belongs to the magnetosome MamP family. Homodimer. Heme is required as a cofactor. In terms of processing, subject to proteolytic cleavage which requires both MamE and MamO.

It localises to the cell inner membrane. Its function is as follows. Involved in redox-control of magnetite formation. Oxidizes Fe(2+) at alkaline pH; successively forms ferrihydrite (Fe(3+)(2)O(3) 0.5 H(2)O) then magnetite (Fe(3)O(4)) from an Fe(2+) solution. This chain is Multi-heme protein MamP, found in Magnetospirillum gryphiswaldense (strain DSM 6361 / JCM 21280 / NBRC 15271 / MSR-1).